The primary structure comprises 454 residues: MLDKNTNLTHQSKIEFVNSNLRGIGFVNNTKIEVPYSLPGDVYNVTFFKKKRRKPSAKLELVSQTQRSFIPPCSAFTKCGGCCAQHISYQDQFRYKTSSLLESYKKDFEIVPTLYPAQKTFYYRNRMDFAVFPGPIVGQREAGSFRHIVDLETCLIQSKESNEELYRFRNLISKFPNLPYDRKSDSGFLKYFTLRKAKNTSELMTILTFVEEFKNTIEEKEFENVCLKSLKADHILFCFNRRKGEISATGEIKILKGMDSYKELVCGKEFRVPFDSFFQPNPEGFQPILDFIEKEIPDSFDHLVDLFCGSGFFSRIFAHKFLKITGIDSIESSLEIARKQMSLDFPKIDSSYLKVDLFSKHSSSKLKVLFSSSDKDVLIADPPRAGLGEFVLDALKDSKVSYFFYVSCNPTSQKSDLWKLKDFFQIQKILITDPYPQTPHLESVAFLKRKNFTT.

[4Fe-4S] cluster contacts are provided by Cys-73, Cys-79, Cys-82, and Cys-154. Residues Gln-279, Phe-307, Asp-328, and Asp-381 each contribute to the S-adenosyl-L-methionine site. The active-site Nucleophile is the Cys-408.

This sequence belongs to the class I-like SAM-binding methyltransferase superfamily. RNA M5U methyltransferase family.

This is an uncharacterized protein from Leptospira interrogans serogroup Icterohaemorrhagiae serovar copenhageni (strain Fiocruz L1-130).